We begin with the raw amino-acid sequence, 137 residues long: DNA-binding protein H-NS (137 aa).

A DNA-binding region spans residues 112–117; it reads QGRTPA.

This sequence belongs to the histone-like protein H-NS family. In terms of assembly, homodimer that oligomerizes on DNA into higher-order complexes that form bridges between disparate regions of DNA compacting it. Interacts with Hha, YdgT and StpA.

The protein localises to the cytoplasm. It is found in the nucleoid. Its function is as follows. A DNA-binding protein implicated in transcriptional repression and chromosome organization and compaction. Binds nucleation sites in AT-rich DNA and bridges them, forming higher-order nucleoprotein complexes and condensing the chromosome. As many horizontally transferred genes are AT-rich, it plays a central role in silencing foreign genes. A subset of genes are repressed by H-NS in association with other proteins. The polypeptide is DNA-binding protein H-NS (hns) (Salmonella paratyphi A (strain ATCC 9150 / SARB42)).